Here is an 888-residue protein sequence, read N- to C-terminus: Glutamate receptor 3 (888 aa).

An N-terminal signal peptide occupies residues 1–22 (MGQSVLRAVFFLVLGLLGHSHG). Residues 23–546 (GFPNTISIGG…GVFSFLDPLA (524 aa)) are Extracellular-facing. N-linked (GlcNAc...) asparagine glycosylation is found at asparagine 57, asparagine 260, asparagine 374, asparagine 409, and asparagine 416. Cysteine 85 and cysteine 334 are oxidised to a cystine. Residues proline 502, threonine 504, and arginine 509 each coordinate L-glutamate. The chain crosses the membrane as a helical span at residues 547–567 (YEIWMCIVFAYIGVSVVLFLV). The Cytoplasmic portion of the chain corresponds to 568-596 (SRFSPYEWHLEDNNEEPRDPQSPPDPPNE). The helical; Pore-forming intramembrane region spans 597 to 612 (FGIFNSLWFSLGAFMQ). Residues 613-615 (QGC) lie within the membrane without spanning it. Residue cysteine 615 is the site of S-palmitoyl cysteine attachment. The Cytoplasmic portion of the chain corresponds to 616 to 621 (DISPRS). Residues 622–642 (LSGRIVGGVWWFFTLIIISSY) form a helical membrane-spanning segment. The Extracellular segment spans residues 643-817 (TANLAAFLTV…DKTSALSLSN (175 aa)). The L-glutamate site is built by serine 680, threonine 681, and glutamate 731. A disulfide bridge links cysteine 744 with cysteine 799. Residues 818-838 (VAGVFYILVGGLGLAMMVALI) traverse the membrane as a helical segment. Over 839–888 (EFCYKSRAESKRMKLTKNTQNFKPAPATNTQNYATYREGYNVYGTESVKI) the chain is Cytoplasmic. A lipid anchor (S-palmitoyl cysteine) is attached at cysteine 841. Phosphotyrosine occurs at positions 871 and 881.

Belongs to the glutamate-gated ion channel (TC 1.A.10.1) family. GRIA3 subfamily. Homotetramer or heterotetramer of pore-forming glutamate receptor subunits. Tetramers may be formed by the dimerization of dimers. Interacts with PICK1, GRIP1 and GRIP2. Found in a complex with GRIA1, GRIA2, GRIA4, CNIH2, CNIH3, CACNG2, CACNG3, CACNG4, CACNG5, CACNG7 and CACNG8. Interacts with CACNG5. Found in a complex with GRIA1, GRIA2, GRIA4, DLG4, CACNG8 and CNIH2.

It localises to the cell membrane. It is found in the postsynaptic cell membrane. The protein resides in the postsynaptic density membrane. The catalysed reaction is Ca(2+)(in) = Ca(2+)(out). In terms of biological role, ionotropic glutamate receptor that functions as a ligand-gated cation channel, gated by L-glutamate and glutamatergic agonists such as alpha-amino-3-hydroxy-5-methyl-4-isoxazolepropionic acid (AMPA), quisqualic acid, and kainic acid. L-glutamate acts as an excitatory neurotransmitter at many synapses in the central nervous system and plays an important role in fast excitatory synaptic transmission by inducing long-term potentiation. Binding of the excitatory neurotransmitter L-glutamate induces a conformation change, leading to the opening of the cation channel, and thereby converts the chemical signal to an electrical impulse upon entry of calcium. The receptor then desensitizes rapidly and enters a transient inactive state, characterized by the presence of bound agonist. In the presence of CACNG8, shows resensitization which is characterized by a delayed accumulation of current flux upon continued application of glutamate. In Rattus norvegicus (Rat), this protein is Glutamate receptor 3.